A 527-amino-acid chain; its full sequence is MTHQAAEVAKRRTFAIISHPDAGKTTITEKLLLMGKAIAVAGTVKSRKSDRHATSDWMEMEKQRGISITTSVMQFPYRDHMVNLLDTPGHEDFSEDTYRTLTAVDSALMVLDGGKGVEPRTIALMDVCRLRDTPIVSFINKLDRDIRDPIELLDEIEAVLKIKAAPITWPIGCYRDFKGVYHLADDYIIVYTAGHGHERTDVKIIEKLDSDEARAHLGDEYDRFVDQLELVQGACHAFNQQEFLDGQLTPVFFGTALGNFGVDHVLDAVVDWAPRPLPRVANERTVEPVEEKFSGFVFKIQANMDPKHRDRIAFMRICSGKYDKGMKMRHVRTGKDVRIGDALTFFSSEREQLEEAFAGDIIGLHNHGTIQIGDTFTEGESLSFTGIPHFAPELFRRVRLRDPLKSKQLRQGLQQLAEEGATQVFFPERSNDIILGAVGVLQFDVVASRLKEEYKVECSYEPITVYSARWIDCSDKKKLEEFSNKAVENLAVDGGGHLTYLAPTRVNLALMEERWPDVKFRATREHH.

The tr-type G domain occupies 9–277 (AKRRTFAIIS…AVVDWAPRPL (269 aa)). GTP is bound by residues 18–25 (SHPDAGKT), 86–90 (DTPGH), and 140–143 (NKLD).

This sequence belongs to the TRAFAC class translation factor GTPase superfamily. Classic translation factor GTPase family. PrfC subfamily.

It is found in the cytoplasm. Increases the formation of ribosomal termination complexes and stimulates activities of RF-1 and RF-2. It binds guanine nucleotides and has strong preference for UGA stop codons. It may interact directly with the ribosome. The stimulation of RF-1 and RF-2 is significantly reduced by GTP and GDP, but not by GMP. This is Peptide chain release factor 3 from Pseudomonas fluorescens (strain SBW25).